The following is a 92-amino-acid chain: Large ribosomal subunit protein eL31 (92 aa).

An N-acetylserine modification is found at Ser-2.

This sequence belongs to the eukaryotic ribosomal protein eL31 family. As to quaternary structure, part of the 50S ribosomal subunit.

Binds to the 23S rRNA. Located at the polypeptide exit tunnel on the outside of the subunit. In Haloarcula marismortui (strain ATCC 43049 / DSM 3752 / JCM 8966 / VKM B-1809) (Halobacterium marismortui), this protein is Large ribosomal subunit protein eL31 (rpl31e).